A 177-amino-acid chain; its full sequence is ATP-dependent protease subunit HslV (177 aa).

Residue Thr2 is part of the active site. The Na(+) site is built by Gly157, Cys160, and Thr163.

The protein belongs to the peptidase T1B family. HslV subfamily. As to quaternary structure, a double ring-shaped homohexamer of HslV is capped on each side by a ring-shaped HslU homohexamer. The assembly of the HslU/HslV complex is dependent on binding of ATP.

It is found in the cytoplasm. It catalyses the reaction ATP-dependent cleavage of peptide bonds with broad specificity.. Its activity is regulated as follows. Allosterically activated by HslU binding. Protease subunit of a proteasome-like degradation complex believed to be a general protein degrading machinery. The protein is ATP-dependent protease subunit HslV of Aeromonas hydrophila subsp. hydrophila (strain ATCC 7966 / DSM 30187 / BCRC 13018 / CCUG 14551 / JCM 1027 / KCTC 2358 / NCIMB 9240 / NCTC 8049).